A 314-amino-acid chain; its full sequence is tRNA pseudouridine synthase B (314 aa).

Substrate is bound at residue H43. The Nucleophile role is filled by D48. Y76, Y179, and L200 together coordinate substrate.

Belongs to the pseudouridine synthase TruB family. Type 1 subfamily.

It catalyses the reaction uridine(55) in tRNA = pseudouridine(55) in tRNA. In terms of biological role, responsible for synthesis of pseudouridine from uracil-55 in the psi GC loop of transfer RNAs. This is tRNA pseudouridine synthase B from Escherichia coli O139:H28 (strain E24377A / ETEC).